We begin with the raw amino-acid sequence, 471 residues long: UDP-N-acetylmuramate--L-alanine ligase (471 aa).

ATP is bound at residue 114–120 (GTHGKTT).

Belongs to the MurCDEF family.

It is found in the cytoplasm. It catalyses the reaction UDP-N-acetyl-alpha-D-muramate + L-alanine + ATP = UDP-N-acetyl-alpha-D-muramoyl-L-alanine + ADP + phosphate + H(+). It participates in cell wall biogenesis; peptidoglycan biosynthesis. Functionally, cell wall formation. The chain is UDP-N-acetylmuramate--L-alanine ligase from Allorhizobium ampelinum (strain ATCC BAA-846 / DSM 112012 / S4) (Agrobacterium vitis (strain S4)).